We begin with the raw amino-acid sequence, 294 residues long: Tryptophan 2,3-dioxygenase (294 aa).

The disordered stretch occupies residues 1-20 (MSEFKGCPFSGAASEAGTKA). Residues 63 to 67 (FIVQH), Y125, and R129 each bind substrate. H252 contacts heme. T266 serves as a coordination point for substrate.

This sequence belongs to the tryptophan 2,3-dioxygenase family. As to quaternary structure, homotetramer. Requires heme as cofactor.

The catalysed reaction is L-tryptophan + O2 = N-formyl-L-kynurenine. It participates in amino-acid degradation; L-tryptophan degradation via kynurenine pathway; L-kynurenine from L-tryptophan: step 1/2. Its function is as follows. Heme-dependent dioxygenase that catalyzes the oxidative cleavage of the L-tryptophan (L-Trp) pyrrole ring and converts L-tryptophan to N-formyl-L-kynurenine. Catalyzes the oxidative cleavage of the indole moiety. This is Tryptophan 2,3-dioxygenase from Cupriavidus necator (strain ATCC 17699 / DSM 428 / KCTC 22496 / NCIMB 10442 / H16 / Stanier 337) (Ralstonia eutropha).